The sequence spans 192 residues: MKRLEVSNQAKLPTQFGEFCIQCFREKGSNGSKEHLVVFTPNFSQNPLVRLHSECLTGDALGSQKCDCGGALQIALERISKEGGLVIYLRQEGRGIGLFNKVNAYALQDKGYDTIQANEMIGFKDDERDYSIAGEILEYYGIKKMRLLTNNPKKIAALEKYAEVTRESLIVCANEHNQGYLEVKKLKMGHLL.

50–54 lines the GTP pocket; that stretch reads RLHSE. Positions 55, 66, and 68 each coordinate Zn(2+). GTP contacts are provided by residues 92–94 and threonine 114; that span reads EGR. Residue aspartate 126 is the Proton acceptor of the active site. The active-site Nucleophile is the arginine 128. GTP contacts are provided by threonine 149 and lysine 154.

The protein belongs to the GTP cyclohydrolase II family. It depends on Zn(2+) as a cofactor.

The catalysed reaction is GTP + 4 H2O = 2,5-diamino-6-hydroxy-4-(5-phosphoribosylamino)-pyrimidine + formate + 2 phosphate + 3 H(+). It participates in cofactor biosynthesis; riboflavin biosynthesis; 5-amino-6-(D-ribitylamino)uracil from GTP: step 1/4. Catalyzes the conversion of GTP to 2,5-diamino-6-ribosylamino-4(3H)-pyrimidinone 5'-phosphate (DARP), formate and pyrophosphate. In Helicobacter pylori (strain Shi470), this protein is GTP cyclohydrolase-2.